A 365-amino-acid polypeptide reads, in one-letter code: 3-dehydroquinate synthase (365 aa).

NAD(+) contacts are provided by residues 75 to 80, 109 to 113, 133 to 134, K146, and K155; these read DAESGK, GAATD, and TT. Zn(2+) contacts are provided by E188, H253, and H269.

It belongs to the sugar phosphate cyclases superfamily. Dehydroquinate synthase family. NAD(+) is required as a cofactor. Requires Co(2+) as cofactor. Zn(2+) serves as cofactor.

The protein localises to the cytoplasm. It catalyses the reaction 7-phospho-2-dehydro-3-deoxy-D-arabino-heptonate = 3-dehydroquinate + phosphate. Its pathway is metabolic intermediate biosynthesis; chorismate biosynthesis; chorismate from D-erythrose 4-phosphate and phosphoenolpyruvate: step 2/7. Functionally, catalyzes the conversion of 3-deoxy-D-arabino-heptulosonate 7-phosphate (DAHP) to dehydroquinate (DHQ). In Corynebacterium efficiens (strain DSM 44549 / YS-314 / AJ 12310 / JCM 11189 / NBRC 100395), this protein is 3-dehydroquinate synthase.